Reading from the N-terminus, the 113-residue chain is 14 kDa zinc-binding protein (113 aa).

The region spanning 3 to 113 is the HIT domain; sequence IFGKIISKEI…GGRQMNWPPG (111 aa). The Histidine triad motif signature appears at 97–101; it reads HIHVH.

In terms of assembly, homodimer.

The polypeptide is 14 kDa zinc-binding protein (Brassica juncea (Indian mustard)).